We begin with the raw amino-acid sequence, 855 residues long: MAAAATLRLSAQGTVTFEDVAVNFTWEEWNLLSEAQRCLYRDVTLENLALISSLGCWCGVEDEAAPSKQSIYIQRETQVRTPMAGVSPKKAHPCEMCGPILGDILHVADHQGTHHKQKLHRCEAWGNKLYDSGNFHQHQNEHIGEKPYRGSVEEALFAKRCKLHVSGESSVFSESGKDFLPRSGLLQQEASHTGEKSNSKTECVSPIQCGGAHYSCGESMKHFSTKHILSQHQRLLTREECYVCCECGKSFSKYASLSNHQRVHTEKKHECGECGKSFSKYVSFSNHQRVHTEKKHECGECGKSFSKYVSFSNHQRVHTGKRPYECGECGKSFSKYASFSNHQRVHTEKKHYECGECGKSFSKYVSFSNHQRVHTGKRPYECGECGKSFSKYASFSNHQRVHTDKKHYECGECGKSFSQKSSLIQHQRFHTGEKPYGCEECGKSFSSEGHLRSHQRVHAGERPFKCGECVKSFSHKRSLVHHQRVHSGERPYQCGECGKSFSQKGNLVLHQRVHTGARPYECGECGKSFSSKGHLRNHQQIHTGDRLYECGECGKSFSHKGTLILHQRVHPRERSYGCGECGKSFSSIGHLRSHQRVHTGERPYECGECGKSFSHKRSLVHHQRMHTGERPYKCGDCGKSFNEKGHLRNHQRVHTTERPFKCGECGKCFSHKGNLILHQHGHTGERPYVCRECGKLFKKKSHLLVHQRIHNGEKPYACEACQKFFRNKYQLIAHQRVHTGERPYECNDCGKSFTHSSTFCVHKRIHTGEKPYECSECGKSFAESSSFTKHKRVHTGEKPYECSECGKSFAESSSLTKHKRVHTGEKPYKCEKCGKLFNKKSHLLVHQSSHWRKAI.

In terms of domain architecture, KRAB spans 15 to 91; sequence VTFEDVAVNF…PMAGVSPKKA (77 aa). A C2H2-type 1; degenerate zinc finger spans residues 120-142; that stretch reads HRCEAWGNKLYDSGNFHQHQNEH. 22 consecutive C2H2-type zinc fingers follow at residues 242 to 264, 269 to 291, 296 to 318, 324 to 346, 352 to 374, 380 to 402, 408 to 430, 436 to 458, 464 to 486, 492 to 514, 520 to 542, 548 to 570, 576 to 598, 604 to 626, 632 to 654, 660 to 682, 688 to 710, 716 to 738, 744 to 766, 772 to 794, 800 to 822, and 828 to 850; these read YVCC…QRVH, HECG…QRVH, YECG…QRVH, YECG…QRFH, YGCE…QRVH, FKCG…QRVH, YQCG…QRVH, YECG…QQIH, YGCG…QRVH, YECG…QRMH, YKCG…QRVH, FKCG…QHGH, YVCR…QRIH, YACE…QRVH, YECN…KRIH, YECS…KRVH, and YKCE…QSSH. A Glycyl lysine isopeptide (Lys-Gly) (interchain with G-Cter in SUMO2) cross-link involves residue Lys-335. Residue Lys-391 forms a Glycyl lysine isopeptide (Lys-Gly) (interchain with G-Cter in SUMO2) linkage.

This chain is Zinc finger protein 814 (ZNF814), found in Homo sapiens (Human).